The chain runs to 414 residues: Gamma-glutamyl phosphate reductase (414 aa).

This sequence belongs to the gamma-glutamyl phosphate reductase family.

Its subcellular location is the cytoplasm. The catalysed reaction is L-glutamate 5-semialdehyde + phosphate + NADP(+) = L-glutamyl 5-phosphate + NADPH + H(+). The protein operates within amino-acid biosynthesis; L-proline biosynthesis; L-glutamate 5-semialdehyde from L-glutamate: step 2/2. In terms of biological role, catalyzes the NADPH-dependent reduction of L-glutamate 5-phosphate into L-glutamate 5-semialdehyde and phosphate. The product spontaneously undergoes cyclization to form 1-pyrroline-5-carboxylate. This chain is Gamma-glutamyl phosphate reductase, found in Bacillus anthracis (strain A0248).